The following is a 450-amino-acid chain: Phosphoglucosamine mutase (450 aa).

Catalysis depends on serine 101, which acts as the Phosphoserine intermediate. 4 residues coordinate Mg(2+): serine 101, aspartate 242, aspartate 244, and aspartate 246. A Phosphoserine modification is found at serine 101.

This sequence belongs to the phosphohexose mutase family. It depends on Mg(2+) as a cofactor. Post-translationally, activated by phosphorylation.

The catalysed reaction is alpha-D-glucosamine 1-phosphate = D-glucosamine 6-phosphate. In terms of biological role, catalyzes the conversion of glucosamine-6-phosphate to glucosamine-1-phosphate. This Rhodopseudomonas palustris (strain ATCC BAA-98 / CGA009) protein is Phosphoglucosamine mutase.